A 554-amino-acid chain; its full sequence is Phenylalanine--tRNA ligase beta subunit (554 aa).

One can recognise a B5 domain in the interval 276–351 (LTPRYREISI…KNHGYEKFEG (76 aa)). Residues D329, D335, E338, and E339 each coordinate Mg(2+).

It belongs to the phenylalanyl-tRNA synthetase beta subunit family. Type 2 subfamily. As to quaternary structure, tetramer of two alpha and two beta subunits. Mg(2+) is required as a cofactor.

The protein resides in the cytoplasm. It carries out the reaction tRNA(Phe) + L-phenylalanine + ATP = L-phenylalanyl-tRNA(Phe) + AMP + diphosphate + H(+). This chain is Phenylalanine--tRNA ligase beta subunit, found in Methanococcus vannielii (strain ATCC 35089 / DSM 1224 / JCM 13029 / OCM 148 / SB).